The following is a 397-amino-acid chain: DnaJ homolog subfamily A member 4 (397 aa).

The region spanning 4–70 (ETQYYDILGV…RDIYDQGGEQ (67 aa)) is the J domain. Position 18 is a phosphoserine (serine 18). The CR-type zinc finger occupies 122-206 (GITKKLALQK…CSGAKVTREK (85 aa)). Zn(2+)-binding residues include cysteine 135, cysteine 138, cysteine 151, cysteine 154, cysteine 178, cysteine 181, cysteine 194, and cysteine 197. 4 CXXCXGXG motif repeats span residues 135–142 (CEKCEGIG), 151–158 (CPLCKGRG), 178–185 (CIECKGQG), and 194–201 (CENCSGAK). The segment covering 366-380 (EFNPNEQSWRQHREA) has biased composition (basic and acidic residues). A disordered region spans residues 366–397 (EFNPNEQSWRQHREAYEEDDEEPRAGVQCQTA). A Cysteine methyl ester modification is found at cysteine 394. Cysteine 394 is lipidated: S-farnesyl cysteine. A propeptide spans 395-397 (QTA) (removed in mature form).

Specifically expressed in testis and heart.

It is found in the membrane. This is DnaJ homolog subfamily A member 4 (Dnaja4) from Mus musculus (Mouse).